We begin with the raw amino-acid sequence, 146 residues long: MKLNELHPSEGSRHARKRVGRGTSSGFGKTSGRGQKGQHARSGGNTRLGFEGGQMPLFRTMPKRGFKNINRKEYAIVNLADLNKFEEGSVVDFEALKAKGLVKKQLSGVKVLGNGDLNVKLTVKVNKVSEAAKSAIEAAGGTVEVI.

Residues 1–13 (MKLNELHPSEGSR) are compositionally biased toward basic and acidic residues. Positions 1–56 (MKLNELHPSEGSRHARKRVGRGTSSGFGKTSGRGQKGQHARSGGNTRLGFEGGQMP) are disordered. Residues 23–35 (TSSGFGKTSGRGQ) show a composition bias toward gly residues.

It belongs to the universal ribosomal protein uL15 family. In terms of assembly, part of the 50S ribosomal subunit.

In terms of biological role, binds to the 23S rRNA. This chain is Large ribosomal subunit protein uL15, found in Lactobacillus delbrueckii subsp. bulgaricus (strain ATCC 11842 / DSM 20081 / BCRC 10696 / JCM 1002 / NBRC 13953 / NCIMB 11778 / NCTC 12712 / WDCM 00102 / Lb 14).